We begin with the raw amino-acid sequence, 374 residues long: Ribosomal RNA large subunit methyltransferase G (374 aa).

It belongs to the methyltransferase superfamily. RlmG family.

Its subcellular location is the cytoplasm. The enzyme catalyses guanosine(1835) in 23S rRNA + S-adenosyl-L-methionine = N(2)-methylguanosine(1835) in 23S rRNA + S-adenosyl-L-homocysteine + H(+). In terms of biological role, specifically methylates the guanine in position 1835 (m2G1835) of 23S rRNA. The chain is Ribosomal RNA large subunit methyltransferase G from Pseudomonas paraeruginosa (strain DSM 24068 / PA7) (Pseudomonas aeruginosa (strain PA7)).